We begin with the raw amino-acid sequence, 528 residues long: Benzoylformate decarboxylase (528 aa).

Mg(2+)-binding residues include glutamine 117 and leucine 118. The tract at residues 377–460 (TSTVTAFWQR…IILKNGTYGA (84 aa)) is thiamine pyrophosphate binding. Ca(2+) contacts are provided by aspartate 428, asparagine 455, and threonine 457.

It belongs to the TPP enzyme family. Homotetramer. The cofactor is Ca(2+). It depends on thiamine diphosphate as a cofactor. Mg(2+) serves as cofactor.

It catalyses the reaction phenylglyoxylate + H(+) = benzaldehyde + CO2. Its pathway is aromatic compound metabolism; (R)-mandelate degradation; benzoate from (R)-mandelate: step 3/4. In Pseudomonas aeruginosa (strain ATCC 15692 / DSM 22644 / CIP 104116 / JCM 14847 / LMG 12228 / 1C / PRS 101 / PAO1), this protein is Benzoylformate decarboxylase (mdlC).